The primary structure comprises 545 residues: Chaperonin GroEL (545 aa).

ATP-binding positions include 30–33, K51, 87–91, G415, and D495; these read TLGP and DGTTT.

This sequence belongs to the chaperonin (HSP60) family. As to quaternary structure, forms a cylinder of 14 subunits composed of two heptameric rings stacked back-to-back. Interacts with the co-chaperonin GroES.

It is found in the cytoplasm. It catalyses the reaction ATP + H2O + a folded polypeptide = ADP + phosphate + an unfolded polypeptide.. In terms of biological role, together with its co-chaperonin GroES, plays an essential role in assisting protein folding. The GroEL-GroES system forms a nano-cage that allows encapsulation of the non-native substrate proteins and provides a physical environment optimized to promote and accelerate protein folding. The protein is Chaperonin GroEL of Shewanella denitrificans (strain OS217 / ATCC BAA-1090 / DSM 15013).